Consider the following 228-residue polypeptide: 5'-methylthioadenosine/S-adenosylhomocysteine nucleosidase (228 aa).

E11 functions as the Proton acceptor in the catalytic mechanism. Substrate contacts are provided by residues G77, I151, and 172–173 (ME). Catalysis depends on D196, which acts as the Proton donor.

This sequence belongs to the PNP/UDP phosphorylase family. MtnN subfamily.

It carries out the reaction S-adenosyl-L-homocysteine + H2O = S-(5-deoxy-D-ribos-5-yl)-L-homocysteine + adenine. The catalysed reaction is S-methyl-5'-thioadenosine + H2O = 5-(methylsulfanyl)-D-ribose + adenine. It catalyses the reaction 5'-deoxyadenosine + H2O = 5-deoxy-D-ribose + adenine. Its pathway is amino-acid biosynthesis; L-methionine biosynthesis via salvage pathway; S-methyl-5-thio-alpha-D-ribose 1-phosphate from S-methyl-5'-thioadenosine (hydrolase route): step 1/2. In terms of biological role, catalyzes the irreversible cleavage of the glycosidic bond in both 5'-methylthioadenosine (MTA) and S-adenosylhomocysteine (SAH/AdoHcy) to adenine and the corresponding thioribose, 5'-methylthioribose and S-ribosylhomocysteine, respectively. Also cleaves 5'-deoxyadenosine, a toxic by-product of radical S-adenosylmethionine (SAM) enzymes, into 5-deoxyribose and adenine. This is 5'-methylthioadenosine/S-adenosylhomocysteine nucleosidase from Staphylococcus aureus (strain bovine RF122 / ET3-1).